A 677-amino-acid polypeptide reads, in one-letter code: Methionine--tRNA ligase (677 aa).

The short motif at 15–25 is the 'HIGH' region element; that stretch reads PYANGSIHLGH. The Zn(2+) site is built by cysteine 146, cysteine 149, cysteine 159, and cysteine 162. A 'KMSKS' region motif is present at residues 333-337; it reads KMSKS. Residue lysine 336 coordinates ATP. Positions 575-677 constitute a tRNA-binding domain; sequence DFAKVDLRVA…AGAKPGHQVK (103 aa).

Belongs to the class-I aminoacyl-tRNA synthetase family. MetG type 1 subfamily. In terms of assembly, homodimer. The cofactor is Zn(2+).

The protein localises to the cytoplasm. It carries out the reaction tRNA(Met) + L-methionine + ATP = L-methionyl-tRNA(Met) + AMP + diphosphate. Functionally, is required not only for elongation of protein synthesis but also for the initiation of all mRNA translation through initiator tRNA(fMet) aminoacylation. This chain is Methionine--tRNA ligase, found in Escherichia coli (strain SE11).